Consider the following 201-residue polypeptide: Cytochrome c oxidase subunit 3 (201 aa).

4 helical membrane-spanning segments follow: residues 25 to 45 (VLGLLVFLISESLMFGGLFAA), 65 to 85 (LFVPTINTLILISSSFVIHYG), 100 to 120 (WYWITAAMGAVFLGGQVYEYL), and 137 to 157 (VMTGFHGLHVFIGILLILGVI).

It belongs to the cytochrome c oxidase subunit 3 family.

The protein resides in the cell membrane. The catalysed reaction is 4 Fe(II)-[cytochrome c] + O2 + 8 H(+)(in) = 4 Fe(III)-[cytochrome c] + 2 H2O + 4 H(+)(out). This chain is Cytochrome c oxidase subunit 3 (ctaE), found in Thermostichus vulcanus (Synechococcus vulcanus).